A 118-amino-acid polypeptide reads, in one-letter code: Small ribosomal subunit protein uS13 (118 aa).

The tract at residues 93 to 118 (RNLPVRGQNTKNNARTRKGPTRPLKR) is disordered. Residues 106 to 118 (ARTRKGPTRPLKR) show a composition bias toward basic residues.

It belongs to the universal ribosomal protein uS13 family. Part of the 30S ribosomal subunit. Forms a loose heterodimer with protein S19. Forms two bridges to the 50S subunit in the 70S ribosome.

Located at the top of the head of the 30S subunit, it contacts several helices of the 16S rRNA. In the 70S ribosome it contacts the 23S rRNA (bridge B1a) and protein L5 of the 50S subunit (bridge B1b), connecting the 2 subunits; these bridges are implicated in subunit movement. Contacts the tRNAs in the A and P-sites. This chain is Small ribosomal subunit protein uS13, found in Psychrobacter cryohalolentis (strain ATCC BAA-1226 / DSM 17306 / VKM B-2378 / K5).